Reading from the N-terminus, the 542-residue chain is MVTEVCSMPAASAVKKPFDLRSKMGKWFHHRFPCCKGSGKSNMGTSGDHDDSFMKMLRSKMGKCCHHCFPCCRGSGTSNVGTSGDHDNSFMKTLRSKMGKWCCHCFPCCRGSGKSNVGAWGDYDDSAFMEPRYHVRREDLDKLHRAAWWGKVPRKDLIVMLRDTDMNKRDKQKRTALHLASANGNSEVVQLLLDRRCQLNVLDNKKRTALIKAVQCQEDECVLMLLEHGADQNIPDEYGNTTLHYAVHNEDKLMAKALLLYGADIESKNKCGLTPLLLGVHEQKQQVVKFLIKKKANLNALDRYGRTALILAVCCGSASIVNLLLEQNVDVSSQDLSGQTAREYAVSSHHHVICELLSDYKEKQMLKISSENSNPEQDLKLTSEEESQRLKVSENSQPEKMSQEPEINKDCDREVEEEIKKHGSNPVGLPENLTNGASAGNGDDGLIPQRRSRKPENQQFPDTENEEYHSDEQNDTRKQLSEEQNTGISQDEILTNKQKQIEVAEKKMNSELSLSHKKEEDLLRENSMLQEEIAMLISGDWN.

ANK repeat units follow at residues 138–171, 172–201, 205–234, 238–267, 271–300, 304–333, and 337–373; these read EDLD…KRDK, QKRT…QLNV, KKRT…DQNI, YGNT…DIES, CGLT…NLNA, YGRT…DVSS, and SGQT…SENS. The tract at residues 369–494 is disordered; it reads SSENSNPEQD…NTGISQDEIL (126 aa). Composition is skewed to basic and acidic residues over residues 377-392, 401-412, and 466-481; these read QDLK…RLKV, MSQEPEINKDCD, and EEYH…KQLS. Residues 482 to 494 are compositionally biased toward polar residues; the sequence is EEQNTGISQDEIL. Residues 489 to 538 adopt a coiled-coil conformation; sequence SQDEILTNKQKQIEVAEKKMNSELSLSHKKEEDLLRENSMLQEEIAMLIS.

The protein belongs to the POTE family. In terms of tissue distribution, expressed in prostate and testis.

This is POTE ankyrin domain family member C (POTEC) from Homo sapiens (Human).